The primary structure comprises 275 residues: Interleukin-2 receptor subunit alpha (275 aa).

The signal sequence occupies residues 1–21 (MEPSLLMWRFFVFIVVPGCVT). 2 consecutive Sushi domains span residues 22–81 (EACH…FCNS) and 121–186 (GHCE…KCIS). At 22–243 (EACHDDPPSL…DTFIFTTEYQ (222 aa)) the chain is on the extracellular side. Disulfide bonds link cysteine 24-cysteine 64, cysteine 49-cysteine 77, and cysteine 51-cysteine 79. Residue asparagine 80 is glycosylated (N-linked (GlcNAc...) asparagine). Residues 86 to 130 (KNPVKPVTPGSEEQRERKPTDAQSQTQPPEQADLPGHCEEPPPWE) are disordered. A compositionally biased stretch (basic and acidic residues) spans 121–130 (GHCEEPPPWE). Cystine bridges form between cysteine 123–cysteine 168 and cysteine 152–cysteine 184. Residues 188–213 (GANSQAPDEAEPPESTEAPPGSGTFL) form a disordered region. The chain crosses the membrane as a helical span at residues 244–262 (IAVAGCILLLSSILLLSCL). Topologically, residues 263–275 (TWQRRWKKNRRTI) are cytoplasmic.

In terms of assembly, non-covalent dimer of an alpha and a beta subunit. IL2R exists in 3 different forms: a high affinity dimer, an intermediate affinity monomer (beta subunit), and a low affinity monomer (alpha subunit). The high and intermediate affinity forms also associate with a gamma subunit.

It localises to the membrane. Receptor for interleukin-2. The receptor is involved in the regulation of immune tolerance by controlling regulatory T cells (TREGs) activity. TREGs suppress the activation and expansion of autoreactive T-cells. This Ovis aries (Sheep) protein is Interleukin-2 receptor subunit alpha (IL2RA).